Here is a 417-residue protein sequence, read N- to C-terminus: D-amino acid dehydrogenase (417 aa).

3 to 17 (AVVLGSGVVGLMSAW) contacts FAD.

Belongs to the DadA oxidoreductase family. FAD is required as a cofactor.

It carries out the reaction a D-alpha-amino acid + A + H2O = a 2-oxocarboxylate + AH2 + NH4(+). Functionally, oxidative deamination of D-amino acids. The polypeptide is D-amino acid dehydrogenase (Vibrio vulnificus (strain YJ016)).